The primary structure comprises 182 residues: Probable tail terminator protein (182 aa).

Its subcellular location is the virion. The protein localises to the host cytoplasm. Functionally, may stop tail tube polymerization by capping the rapidly polymerizing tail tube once it has reached its requisite length and prevent its depolymerization. This Enterobacteriaceae (Bacteriophage Mu) protein is Probable tail terminator protein.